The sequence spans 501 residues: MQETVTTSALLDPSHSSVSTQDKSSTGGHTSSTGPQPSKPSITPVSAKSRNPHPGANFHRMRRIIAEDPEWSLAIVPLLTELCIQHIIRNFQNNPILKQMLPEHQQKVLNHLSPDLPLAVTSNLIDNENYWLRCCMQRWPVCHVAHHGGSWKRMFFERHLENLLKHFIPGTTDPAVILDLLPLCRNYVRRVHVDQFLPPVQIPAQLRPGDQSDSGSEGEMEEPTVDHYQLGDLVAGLSHLEELDLVYDVKDCGMNFEWNLFLFTYRDCHSLAAAIKACHTLKIFKLTRSKVDDDKARIIIRSLLDHPVLEELDLSHNLIGDRGARGAAKLLNHSRLRVLNLANNQVRAPGAQSLAHALAHNTNLISLNLRLNCIEDEGGQALAHALQTNKCLTTLHLGGNELSEPTATLLSQVLAINTTLTSINLSCNHIGLDGGKQLLEGMSDNKTLLEFDLRLSDVAQESEYLIGQALYANREAARQRALNPSHFMSTITANGPENSVG.

Positions 1 to 23 (MQETVTTSALLDPSHSSVSTQDK) are enriched in polar residues. 2 disordered regions span residues 1-56 (MQET…HPGA) and 203-222 (PAQL…EMEE). Residues 24-34 (SSTGGHTSSTG) are compositionally biased toward low complexity. Positions 35–49 (PQPSKPSITPVSAKS) are enriched in polar residues. LRR repeat units follow at residues 308 to 321 (VLEE…LIGD), 335 to 355 (RLRV…QSLA), 363 to 383 (NLIS…QALA), 391 to 411 (CLTT…TLLS), and 419 to 439 (TLTS…KQLL).

Belongs to the DRC5 family. Component of the nexin-dynein regulatory complex (N-DRC). Interacts with DRC1. Interacts with FBXL13/DRC6, DRC3 and DRC7.

The protein localises to the cell projection. Its subcellular location is the cilium. It localises to the flagellum. It is found in the cytoplasm. The protein resides in the cytoskeleton. The protein localises to the flagellum axoneme. Its function is as follows. Component of the nexin-dynein regulatory complex (N-DRC) a key regulator of ciliary/flagellar motility which maintains the alignment and integrity of the distal axoneme and regulates microtubule sliding in motile axonemes. May play a role in the assembly of N-DRC. May be required for sperm motility. The chain is Dynein regulatory complex subunit 5 (TCTE1) from Macaca fascicularis (Crab-eating macaque).